Here is a 502-residue protein sequence, read N- to C-terminus: MQDWRAALEEYYSRYLDSALVLAIVNDSDDSNTAREILEALSIESQCDSHEEHWDNLRRDEQELLNLKTLDEEINKIDEEDFTWELKDSSLELDPDVYNFLRSMFSDLSAARVQLVQAKCQNDLVRSSDELLNHRAIQESEQIETAADALITSNIGHRSRQRKKKTKKATNSRKPLSKFQSNTEEVNEDPILKPSLSVWENNRLLIEKLTSILNIPSSQINHEFYKNSSAWPITIRNLIHRHQPLSNITNNELMKYQEEATQLAKDTGLSLKICTDVLICSNDYKNALWILCLIKETQHNEMGNIKLSSQTAKSNSSTQTKTCLNDQSSKLVEDDEALSAEDCNRLAEEYLELRNMQYSNSAKEYRRSKSNHLFGGSAMYHAQLGREYHEKALKYRSLAMRSLAHSGTSHSLDLHGATVREAKTIVRERVAAWWAKEADTSPNSIRPFVIVTGRGNHSIGLEARLLPAIVRLLQQDHWRFDAEHGQITVYGINRHSKLNSNA.

Positions 150–184 (LITSNIGHRSRQRKKKTKKATNSRKPLSKFQSNTE) are disordered. Residues 157-171 (HRSRQRKKKTKKATN) show a composition bias toward basic residues. Positions 411 to 459 (SLDLHGATVREAKTIVRERVAAWWAKEADTSPNSIRPFVIVTGRGNHSI) constitute a Smr domain.

Its subcellular location is the nucleus. The protein resides in the nucleolus. The polypeptide is Smr domain-containing protein C1235.03 (Schizosaccharomyces pombe (strain 972 / ATCC 24843) (Fission yeast)).